The primary structure comprises 173 residues: Succinate dehydrogenase assembly factor 3, mitochondrial (173 aa).

The transit peptide at 1-59 (MFRPSTSLALRSTLRQLASASNQPIPPGSEINAVKRTVATILPPIRLYRRIIRAHRRLD) directs the protein to the mitochondrion. The disordered stretch occupies residues 149-173 (FPPEKQRELAEKAAADAGLSVKKDE). Residues 152-162 (EKQRELAEKAA) show a composition bias toward basic and acidic residues.

Belongs to the complex I LYR family. SDHAF3 subfamily. Interacts with the iron-sulfur protein subunit within the SDH catalytic dimer.

The protein localises to the mitochondrion matrix. Its function is as follows. Plays an essential role in the assembly of succinate dehydrogenase (SDH), an enzyme complex (also referred to as respiratory complex II) that is a component of both the tricarboxylic acid (TCA) cycle and the mitochondrial electron transport chain, and which couples the oxidation of succinate to fumarate with the reduction of ubiquinone (coenzyme Q) to ubiquinol. Promotes maturation of the iron-sulfur protein subunit of the SDH catalytic dimer, protecting it from the deleterious effects of oxidants. May act together with SDHAF1. This chain is Succinate dehydrogenase assembly factor 3, mitochondrial, found in Mycosarcoma maydis (Corn smut fungus).